We begin with the raw amino-acid sequence, 412 residues long: Histone-lysine N-methyltransferase SUV39H1 (412 aa).

An interaction with SIRT1 region spans residues 1–89; sequence MAENLKGCSV…LKCIRVLKQF (89 aa). One can recognise a Chromo domain in the interval 43–101; it reads FEVEYLCDYKKIREQEYYLVKWRGYPDSENTWEPRQNLKCIRVLKQFHKDLERELVRRH. Positions 179-240 constitute a Pre-SET domain; sequence VGCECQDCLL…DCPNRVVQKG (62 aa). The Zn(2+) site is built by Cys-181, Cys-183, Cys-186, Cys-194, Cys-195, Cys-222, Cys-226, Cys-228, and Cys-232. One can recognise an SET domain in the interval 243–366; sequence YDLCIFRTND…AGEELTFDYN (124 aa). Residue 254–256 coordinates S-adenosyl-L-methionine; the sequence is RGW. Residues 255 to 377 form a mediates interaction with MECOM region; the sequence is GWGVRTLEKI…QVDPVDMEST (123 aa). Lys-266 carries the post-translational modification N6-acetyllysine. S-adenosyl-L-methionine is bound by residues Tyr-297 and 323-324; that span reads NH. Cys-326 contributes to the Zn(2+) binding site. A Phosphoserine modification is found at Ser-391. One can recognise a Post-SET domain in the interval 396–412; it reads VRIECKCGTTACRKYLF. Zn(2+) is bound by residues Cys-400, Cys-402, and Cys-407.

The protein belongs to the class V-like SAM-binding methyltransferase superfamily. Histone-lysine methyltransferase family. Suvar3-9 subfamily. As to quaternary structure, interacts with CCAR2 and GFI1B. Component of the eNoSC complex, composed of SIRT1, SUV39H1 and RRP8. Interacts with H3 and H4 histones. Interacts with DNMT3B, CBX1, CBX4, MBD1, RUNX1, RUNX3, MYOD1, SMAD5 and RB1. Interacts with SBF1 through the SET domain. Interacts with HDAC1 and HDAC2 through the N-terminus and associates with the core histone deacetylase complex composed of HDAC1, HDAC2, RBBP4 and RBBP7. Interacts (via SET domain) with MECOM; enhances MECOM transcriptional repression activity. Interacts with LMNA; the interaction increases stability of SUV39H1. The large PER complex involved in the histone methylation is composed of at least PER2, CBX3, TRIM28, SUV39H1 and/or SUV39H2; CBX3 mediates the formation of the complex. Phosphorylated on serine residues, and to a lesser degree, on threonine residues. In terms of processing, acetylated at Lys-266, leading to inhibition of enzyme activity. SIRT1-mediated deacetylation relieves this inhibition. Post-translationally, ubiquitinated by the DCX(DCAF13) E3 ubiquitin ligase complex, leading to its degradation. In terms of tissue distribution, widely expressed.

Its subcellular location is the nucleus. The protein localises to the nucleus lamina. The protein resides in the nucleoplasm. It localises to the chromosome. It is found in the centromere. It carries out the reaction L-lysyl(9)-[histone H3] + 3 S-adenosyl-L-methionine = N(6),N(6),N(6)-trimethyl-L-lysyl(9)-[histone H3] + 3 S-adenosyl-L-homocysteine + 3 H(+). With respect to regulation, negatively regulated by CCAR2. Histone methyltransferase that specifically trimethylates 'Lys-9' of histone H3 using monomethylated H3 'Lys-9' as substrate. H3 'Lys-9' trimethylation represents a specific tag for epigenetic transcriptional repression by recruiting HP1 (CBX1, CBX3 and/or CBX5) proteins to methylated histones. Mainly functions in heterochromatin regions, thereby playing a central role in the establishment of constitutive heterochromatin at pericentric and telomere regions. H3 'Lys-9' trimethylation is also required to direct DNA methylation at pericentric repeats. SUV39H1 is targeted to histone H3 via its interaction with RB1 and is involved in many processes, such as repression of MYOD1-stimulated differentiation, regulation of the control switch for exiting the cell cycle and entering differentiation, repression by the PML-RARA fusion protein, BMP-induced repression, repression of switch recombination to IgA and regulation of telomere length. Component of the eNoSC (energy-dependent nucleolar silencing) complex, a complex that mediates silencing of rDNA in response to intracellular energy status and acts by recruiting histone-modifying enzymes. The eNoSC complex is able to sense the energy status of cell: upon glucose starvation, elevation of NAD(+)/NADP(+) ratio activates SIRT1, leading to histone H3 deacetylation followed by dimethylation of H3 at 'Lys-9' (H3K9me2) by SUV39H1 and the formation of silent chromatin in the rDNA locus. Recruited by the PER complex to the E-box elements of the circadian target genes such as PER2 itself or PER1, contributes to the conversion of local chromatin to a heterochromatin-like repressive state through H3 'Lys-9' trimethylation. This Mus musculus (Mouse) protein is Histone-lysine N-methyltransferase SUV39H1 (Suv39h1).